Reading from the N-terminus, the 188-residue chain is Putative manganese efflux pump MntP (188 aa).

Transmembrane regions (helical) follow at residues 3-23, 35-55, 63-83, 107-127, 131-151, and 167-187; these read FYAL…VALA, IAAT…AGWV, FISE…GLKM, VLTA…LAFM, IAFA…VGLA, and AGGL…LGLI.

It belongs to the MntP (TC 9.B.29) family.

Its subcellular location is the cell inner membrane. Its function is as follows. Probably functions as a manganese efflux pump. This chain is Putative manganese efflux pump MntP, found in Neisseria meningitidis serogroup A / serotype 4A (strain DSM 15465 / Z2491).